The sequence spans 483 residues: Zinc metalloproteinase/disintegrin VMP-II (483 aa).

Positions 1–20 (MIQVLLVTLCLAAFPYQGNS) are cleaved as a signal peptide. The propeptide occupies 21 to 191 (IILESGNVND…KASQLNLTPE (171 aa)). In terms of domain architecture, Peptidase M12B spans 198–394 (RYIELVVVAD…HNPQCMLNEP (197 aa)). 2 residues coordinate Ca(2+): E201 and D285. Cystine bridges form between C309–C389, C349–C373, and C351–C356. H334 lines the Zn(2+) pocket. E335 is an active-site residue. Zn(2+)-binding residues include H338 and H344. Ca(2+)-binding residues include C389 and N392. Positions 395–414 (LRTDIVSTPVSGNELWETGE) are excised as a propeptide. The Disintegrin domain maps to 402 to 483 (TPVSGNELWE…AGCPRNPFHA (82 aa)). Intrachain disulfides connect C425-C448, C439-C445, C444-C469, and C457-C476. A Cell attachment site; atypical (KGD) motif is present at residues 461-463 (KGD).

The protein belongs to the venom metalloproteinase (M12B) family. P-II subfamily. P-IIe sub-subfamily. In terms of assembly, heterodimer; disulfide-linked (disintegrin). Zn(2+) is required as a cofactor. Expressed by the venom gland.

It localises to the secreted. Inhibited by EDTA and 1,10-phenanthroline, but not by PMSF. In terms of biological role, has fibrinolytic activity. The recombinant enzyme cleaves both alpha- (FGA) and beta-chains (FGB) of fibrinogen, but not the gamma-chain. The recombinant protein does not produce hemorrhage in mice and does not have effect on ADP- or collagen-stimulated platelet aggregation. Its function is as follows. Inhibits platelet aggregation induced by ADP, thrombin, platelet-activating factor and collagen. Acts by inhibiting fibrinogen interaction with platelet receptors GPIIb/GPIIIa (ITGA2B/ITGB3). The sequence is that of Zinc metalloproteinase/disintegrin VMP-II from Agkistrodon piscivorus leucostoma (Western cottonmouth).